A 101-amino-acid chain; its full sequence is Apolipoprotein C-II (101 aa).

The N-terminal stretch at 1 to 22 (MGIRYLLVLVLVLLVLGCEVQG) is a signal peptide. Residues 66–74 (TVDEKIREI) form a lipid binding region. Positions 78–101 (STAAVSTYAGIFTDQLLSMLKGDQ) are lipoprotein lipase cofactor.

This sequence belongs to the apolipoprotein C2 family. In terms of processing, proapolipoprotein C-II is synthesized as a sialic acid containing glycoprotein which is subsequently desialylated prior to its proteolytic processing. Post-translationally, proapolipoprotein C-II, the major form found in plasma undergoes proteolytic cleavage of its N-terminal hexapeptide to generate apolipoprotein C-II, which occurs as the minor form in plasma.

It localises to the secreted. Functionally, component of chylomicrons, very low-density lipoproteins (VLDL), low-density lipoproteins (LDL), and high-density lipoproteins (HDL) in plasma. Plays an important role in lipoprotein metabolism as an activator of lipoprotein lipase. Both proapolipoprotein C-II and apolipoprotein C-II can activate lipoprotein lipase. The protein is Apolipoprotein C-II (APOC2) of Mirounga angustirostris (Northern elephant seal).